The primary structure comprises 457 residues: Omega-hydroxypalmitate O-feruloyl transferase (457 aa).

Catalysis depends on proton acceptor residues histidine 184 and aspartate 404.

Belongs to the plant acyltransferase family. In terms of tissue distribution, expressed in roots, seedlings, leaves, stems, flowers and siliques. Detected at the protein level in roots and in seed coats.

It carries out the reaction 16-hydroxyhexadecanoate + (E)-feruloyl-CoA = 16-feruloyloxyhexadecanoate + CoA. Its function is as follows. Involved in the synthesis of aromatics of the suberin polymer. Specifically affects the accumulation of the ferulate constituent of suberin in roots and seeds, but has no effect on the content of p-coumarate or sinapate. The protein is Omega-hydroxypalmitate O-feruloyl transferase (HHT1) of Arabidopsis thaliana (Mouse-ear cress).